The primary structure comprises 391 residues: Casein kinase II subunit alpha (391 aa).

The interval 36–41 (QDDYQL) is interaction with beta subunit. The Protein kinase domain occupies 39–324 (YQLVRKLGRG…AREAMEHPYF (286 aa)). ATP is bound by residues 45–53 (LGRGKYSEV) and Lys-68. Catalysis depends on Asp-156, which acts as the Proton acceptor. Phosphothreonine; by CDK1 occurs at positions 344 and 360. Ser-362 and Ser-370 each carry phosphoserine; by CDK1.

Belongs to the protein kinase superfamily. Ser/Thr protein kinase family. CK2 subfamily. As to quaternary structure, heterotetramer composed of two catalytic subunits (alpha chain and/or alpha' chain) and two regulatory subunits (beta chains). The tetramer can exist as a combination of 2 alpha/2 beta, 2 alpha'/2 beta or 1 alpha/1 alpha'/2 beta subunits. Also part of a CK2-SPT16-SSRP1 complex composed of SSRP1, SUPT16H, CSNK2A1, CSNK2A2 and CSNK2B, which forms following UV irradiation. Interacts with RNPS1. Interacts with SNAI1. Interacts with PML. Interacts with CCAR2. Interacts with HIRIP3. Post-translationally, phosphorylated at Thr-344, Thr-360, Ser-362 and Ser-370 by CDK1 in prophase and metaphase and dephosphorylated during anaphase. Phosphorylation does not directly affect casein kinase 2 activity, but may contribute to its regulation by forming binding sites for interacting proteins and/or targeting it to different compartments.

The protein localises to the nucleus. It carries out the reaction L-seryl-[protein] + ATP = O-phospho-L-seryl-[protein] + ADP + H(+). The catalysed reaction is L-threonyl-[protein] + ATP = O-phospho-L-threonyl-[protein] + ADP + H(+). Constitutively active protein kinase whose activity is not directly affected by phosphorylation. Seems to be regulated by level of expression and localization. Functionally, catalytic subunit of a constitutively active serine/threonine-protein kinase complex that phosphorylates a large number of substrates containing acidic residues C-terminal to the phosphorylated serine or threonine. Regulates numerous cellular processes, such as cell cycle progression, apoptosis and transcription, as well as viral infection. May act as a regulatory node which integrates and coordinates numerous signals leading to an appropriate cellular response. During mitosis, functions as a component of the p53/TP53-dependent spindle assembly checkpoint (SAC) that maintains cyclin-B-CDK1 activity and G2 arrest in response to spindle damage. Also required for p53/TP53-mediated apoptosis, phosphorylating 'Ser-392' of p53/TP53 following UV irradiation. Phosphorylates a number of DNA repair proteins in response to DNA damage, such as MDC1, MRE11, RAD9A, RAD51 and HTATSF1, promoting their recruitment to DNA damage sites. Can also negatively regulate apoptosis. Phosphorylates the caspases CASP9 and CASP2 and the apoptotic regulator NOL3. Phosphorylation protects CASP9 from cleavage and activation by CASP8, and inhibits the dimerization of CASP2 and activation of CASP8. Phosphorylates YY1, protecting YY1 from cleavage by CASP7 during apoptosis. Regulates transcription by direct phosphorylation of RNA polymerases I, II, III and IV. Also phosphorylates and regulates numerous transcription factors including NF-kappa-B, STAT1, CREB1, IRF1, IRF2, ATF1, ATF4, SRF, MAX, JUN, FOS, MYC and MYB. Phosphorylates Hsp90 and its co-chaperones FKBP4 and CDC37, which is essential for chaperone function. Mediates sequential phosphorylation of FNIP1, promoting its gradual interaction with Hsp90, leading to activate both kinase and non-kinase client proteins of Hsp90. Regulates Wnt signaling by phosphorylating CTNNB1 and the transcription factor LEF1. Acts as an ectokinase that phosphorylates several extracellular proteins. Phosphorylates PML at 'Ser-565' and primes it for ubiquitin-mediated degradation. Plays an important role in the circadian clock function by phosphorylating BMAL1 at 'Ser-90' which is pivotal for its interaction with CLOCK and which controls CLOCK nuclear entry. Phosphorylates FMR1, promoting FMR1-dependent formation of a membraneless compartment. May phosphorylate histone H2A on 'Ser-1'. This is Casein kinase II subunit alpha (CSNK2A1) from Oryctolagus cuniculus (Rabbit).